We begin with the raw amino-acid sequence, 298 residues long: Probable aspartoacylase (298 aa).

Zn(2+) is bound by residues H13 and E16. Residues R54 and 61–62 (NR) each bind substrate. Zn(2+) is bound at residue H103. Substrate contacts are provided by E161 and Y271.

Belongs to the AspA/AstE family. Aspartoacylase subfamily. Zn(2+) is required as a cofactor.

It carries out the reaction an N-acyl-L-aspartate + H2O = a carboxylate + L-aspartate. The sequence is that of Probable aspartoacylase from Prochlorococcus marinus (strain MIT 9515).